We begin with the raw amino-acid sequence, 638 residues long: LEAF RUST 10 DISEASE-RESISTANCE LOCUS RECEPTOR-LIKE PROTEIN KINASE-like 2.1 (638 aa).

An N-terminal signal peptide occupies residues 1-29; the sequence is MINLSLYQTNSLSYTIIWMLFVIPSCVLS. Residues 30–264 lie on the Extracellular side of the membrane; the sequence is VDERQKHCSP…EHTCGKMGIG (235 aa). N-linked (GlcNAc...) asparagine glycans are attached at residues Asn-69, Asn-114, Asn-136, Asn-204, and Asn-239. A helical membrane pass occupies residues 265-285; it reads IGLGCGFLGATLITVCLLCFF. At 286-638 the chain is on the cytoplasmic side; that stretch reads FQKRRTSHHL…YTEVFIGSTS (353 aa). A Protein kinase domain is found at 321-609; the sequence is KLFSHTLGKG…VLEVPPKPSI (289 aa). ATP contacts are provided by residues 327 to 335 and Lys-349; that span reads LGKGGFGTV. At Tyr-393 the chain carries Phosphotyrosine. The Proton acceptor role is filled by Asp-444. Position 484 is a phosphothreonine (Thr-484).

The protein belongs to the protein kinase superfamily. Ser/Thr protein kinase family.

The protein resides in the membrane. The enzyme catalyses L-seryl-[protein] + ATP = O-phospho-L-seryl-[protein] + ADP + H(+). The catalysed reaction is L-threonyl-[protein] + ATP = O-phospho-L-threonyl-[protein] + ADP + H(+). The sequence is that of LEAF RUST 10 DISEASE-RESISTANCE LOCUS RECEPTOR-LIKE PROTEIN KINASE-like 2.1 from Arabidopsis thaliana (Mouse-ear cress).